We begin with the raw amino-acid sequence, 309 residues long: 4-hydroxy-3-methylbut-2-enyl diphosphate reductase (309 aa).

[4Fe-4S] cluster is bound at residue cysteine 13. (2E)-4-hydroxy-3-methylbut-2-enyl diphosphate contacts are provided by histidine 42 and histidine 75. The dimethylallyl diphosphate site is built by histidine 42 and histidine 75. Isopentenyl diphosphate-binding residues include histidine 42 and histidine 75. Residue cysteine 97 participates in [4Fe-4S] cluster binding. Histidine 125 is a (2E)-4-hydroxy-3-methylbut-2-enyl diphosphate binding site. Histidine 125 provides a ligand contact to dimethylallyl diphosphate. Histidine 125 contacts isopentenyl diphosphate. The active-site Proton donor is the glutamate 127. (2E)-4-hydroxy-3-methylbut-2-enyl diphosphate is bound at residue threonine 165. Cysteine 195 is a binding site for [4Fe-4S] cluster. (2E)-4-hydroxy-3-methylbut-2-enyl diphosphate contacts are provided by serine 223, serine 224, asparagine 225, and serine 267. The dimethylallyl diphosphate site is built by serine 223, serine 224, asparagine 225, and serine 267. 4 residues coordinate isopentenyl diphosphate: serine 223, serine 224, asparagine 225, and serine 267.

This sequence belongs to the IspH family. Requires [4Fe-4S] cluster as cofactor.

The enzyme catalyses isopentenyl diphosphate + 2 oxidized [2Fe-2S]-[ferredoxin] + H2O = (2E)-4-hydroxy-3-methylbut-2-enyl diphosphate + 2 reduced [2Fe-2S]-[ferredoxin] + 2 H(+). It carries out the reaction dimethylallyl diphosphate + 2 oxidized [2Fe-2S]-[ferredoxin] + H2O = (2E)-4-hydroxy-3-methylbut-2-enyl diphosphate + 2 reduced [2Fe-2S]-[ferredoxin] + 2 H(+). The protein operates within isoprenoid biosynthesis; dimethylallyl diphosphate biosynthesis; dimethylallyl diphosphate from (2E)-4-hydroxy-3-methylbutenyl diphosphate: step 1/1. It participates in isoprenoid biosynthesis; isopentenyl diphosphate biosynthesis via DXP pathway; isopentenyl diphosphate from 1-deoxy-D-xylulose 5-phosphate: step 6/6. Catalyzes the conversion of 1-hydroxy-2-methyl-2-(E)-butenyl 4-diphosphate (HMBPP) into a mixture of isopentenyl diphosphate (IPP) and dimethylallyl diphosphate (DMAPP). Acts in the terminal step of the DOXP/MEP pathway for isoprenoid precursor biosynthesis. This is 4-hydroxy-3-methylbut-2-enyl diphosphate reductase from Chlamydia abortus (strain DSM 27085 / S26/3) (Chlamydophila abortus).